The following is a 286-amino-acid chain: Bifunctional protein FolD (286 aa).

NADP(+)-binding positions include 165-167 (GRS), S190, and V231.

This sequence belongs to the tetrahydrofolate dehydrogenase/cyclohydrolase family. As to quaternary structure, homodimer.

It catalyses the reaction (6R)-5,10-methylene-5,6,7,8-tetrahydrofolate + NADP(+) = (6R)-5,10-methenyltetrahydrofolate + NADPH. The enzyme catalyses (6R)-5,10-methenyltetrahydrofolate + H2O = (6R)-10-formyltetrahydrofolate + H(+). The protein operates within one-carbon metabolism; tetrahydrofolate interconversion. In terms of biological role, catalyzes the oxidation of 5,10-methylenetetrahydrofolate to 5,10-methenyltetrahydrofolate and then the hydrolysis of 5,10-methenyltetrahydrofolate to 10-formyltetrahydrofolate. The chain is Bifunctional protein FolD from Bacillus cytotoxicus (strain DSM 22905 / CIP 110041 / 391-98 / NVH 391-98).